The following is a 357-amino-acid chain: Protein BMRF2 (357 aa).

At 1–11 (MFSCKQHLSLG) the chain is on the virion surface side. The hydrophobic stretch at 12-32 (ACVFCLGLLASTPFIWCFVFA) threads the membrane. The Virion surface segment spans residues 33–46 (NLLSLEIFSPWQTH). A transmembrane helix spans residues 47 to 67 (VYRLGFPTACLMAVLWTLVPA). The Virion surface portion of the chain corresponds to 68 to 70 (KHA). The hydrophobic stretch at 71–91 (VRAVTPAIMLNIASALIFFSL) threads the membrane. Residues 92 to 98 (RVYSTST) lie on the Virion surface side of the membrane. A transmembrane span lies at residues 99-121 (WVSAPCLFLANLPLLCLWPRLAI). Residues 122–133 (EIVYICPAIHQR) are Virion surface-facing. The segment at 134–154 (FFELGLLLACTIFALSVVSRA) is a transmembrane helix. At 155-158 (LEVS) the chain is on the virion surface side. A transmembrane helix spans residues 159–179 (AVFMSPFFIFLALGSGSLAGA). Residues 180-217 (RRNQIYTSGLERRRSIFCARGDHSVASLKETLHKCPWD) are Virion surface-facing. Residues 199–201 (RGD) carry the Integrin binding site motif. At 218–238 (LLAISALTVLVVCVMIVLHVH) the chain is embedded in the membrane. Topologically, residues 239–240 (AE) are virion surface. Residues 241–261 (VFFGLSRYLPLFLCGAMASGG) are membrane-embedded. Residues 262-267 (LYLGHS) lie on the Virion surface side of the membrane. A transmembrane span lies at residues 268–288 (SIIACVMATLCTLTSVVVYFL). At 289–298 (HETLGPLGKT) the chain is on the virion surface side. The chain crosses the lipid bilayer at residues 299 to 319 (VLFISIFVYYFSGVAALSAAM). Over 320–335 (RYKLKKFVNGPLVHLR) the chain is Virion surface. The segment at 336–356 (VVYMCCFVFTFCEYLLVTFIK) is a transmembrane helix. Ser-357 is a topological domain (virion surface).

It belongs to the herpesviridae BMRF2 family. As to quaternary structure, interacts with BDLF2. Interacts with host beta1 integrin family. Extensively glycosylated by O-linked oligosaccharides.

The protein localises to the virion membrane. Its subcellular location is the host cell membrane. In terms of biological role, facilitates virus attachment to oral epithelial cells by binding to host beta1 integrin family. Participates in rearrangement of cellular actin to increase intercellular contacts by binding BDLF2 and thereby promote virus cell-to-cell spreading. The protein is Protein BMRF2 of Homo sapiens (Human).